The chain runs to 657 residues: Regulator of MON1-CCZ1 complex (657 aa).

In terms of domain architecture, Mic1 spans 471-637 (KKEMPHKFVI…NFTPGEHCEE (167 aa)).

This sequence belongs to the RMC1 family. Found in a complex with RMC1, CCZ1 MON1A and MON1B.

The protein resides in the lysosome membrane. The protein localises to the late endosome membrane. Functionally, component of the CCZ1-MON1 RAB7A guanine exchange factor (GEF). Acts as a positive regulator of CCZ1-MON1A/B function necessary for endosomal/autophagic flux and efficient RAB7A localization. In Homo sapiens (Human), this protein is Regulator of MON1-CCZ1 complex.